The primary structure comprises 306 residues: Ribonuclease Z (306 aa).

Residues His63, His65, Asp67, His68, His141, Asp211, and His269 each contribute to the Zn(2+) site. Asp67 functions as the Proton acceptor in the catalytic mechanism.

It belongs to the RNase Z family. As to quaternary structure, homodimer. The cofactor is Zn(2+).

The catalysed reaction is Endonucleolytic cleavage of RNA, removing extra 3' nucleotides from tRNA precursor, generating 3' termini of tRNAs. A 3'-hydroxy group is left at the tRNA terminus and a 5'-phosphoryl group is left at the trailer molecule.. Its function is as follows. Zinc phosphodiesterase, which displays some tRNA 3'-processing endonuclease activity. Probably involved in tRNA maturation, by removing a 3'-trailer from precursor tRNA. The chain is Ribonuclease Z from Staphylococcus carnosus (strain TM300).